The following is an 812-amino-acid chain: DNA translocase FtsK 1 (812 aa).

Positions 1–11 (MTEKSHKKTAK) are enriched in basic residues. Positions 1-36 (MTEKSHKKTAKGRAGSPSPTSARNKKADNGARGNKV) are disordered. The segment covering 25–36 (KKADNGARGNKV) has biased composition (basic and acidic residues). Helical transmembrane passes span 63–83 (IGDA…ISLI), 116–136 (VGYY…CVVL), 156–176 (IAAA…YFVL), 184–204 (LPVG…AWLL), and 210–230 (LLII…ISWL). Topologically, residues 231 to 812 (EFLNGAGRAV…RKILAHKDHL (582 aa)) are cytoplasmic. One can recognise a FtsK domain in the interval 461-670 (GTPVVGDLAK…FTVQSKIDSR (210 aa)). 481–486 (GSGKSV) serves as a coordination point for ATP.

This sequence belongs to the FtsK/SpoIIIE/SftA family. In terms of assembly, homohexamer. Forms a ring that surrounds DNA.

The protein localises to the cell inner membrane. Functionally, essential cell division protein that coordinates cell division and chromosome segregation. The N-terminus is involved in assembly of the cell-division machinery. The C-terminus functions as a DNA motor that moves dsDNA in an ATP-dependent manner towards the dif recombination site, which is located within the replication terminus region. Translocation stops specifically at Xer-dif sites, where FtsK interacts with the Xer recombinase, allowing activation of chromosome unlinking by recombination. FtsK orienting polar sequences (KOPS) guide the direction of DNA translocation. FtsK can remove proteins from DNA as it translocates, but translocation stops specifically at XerCD-dif site, thereby preventing removal of XerC and XerD from dif. The polypeptide is DNA translocase FtsK 1 (ftsK1) (Neisseria meningitidis serogroup B (strain ATCC BAA-335 / MC58)).